The primary structure comprises 294 residues: Cytidine deaminase (294 aa).

CMP/dCMP-type deaminase domains are found at residues 48 to 168 (DEDA…FGPK) and 186 to 294 (LTGD…VLLG). 89-91 (NME) contacts substrate. His-102 is a binding site for Zn(2+). Catalysis depends on Glu-104, which acts as the Proton donor. Zn(2+) contacts are provided by Cys-129 and Cys-132.

This sequence belongs to the cytidine and deoxycytidylate deaminase family. Homodimer. It depends on Zn(2+) as a cofactor.

It carries out the reaction cytidine + H2O + H(+) = uridine + NH4(+). The catalysed reaction is 2'-deoxycytidine + H2O + H(+) = 2'-deoxyuridine + NH4(+). In terms of biological role, this enzyme scavenges exogenous and endogenous cytidine and 2'-deoxycytidine for UMP synthesis. This is Cytidine deaminase from Salmonella agona (strain SL483).